The primary structure comprises 234 residues: Demethylmenaquinone methyltransferase (234 aa).

S-adenosyl-L-methionine contacts are provided by residues Thr-58, Asp-79, and 106 to 107; that span reads NA.

This sequence belongs to the class I-like SAM-binding methyltransferase superfamily. MenG/UbiE family.

It catalyses the reaction a 2-demethylmenaquinol + S-adenosyl-L-methionine = a menaquinol + S-adenosyl-L-homocysteine + H(+). The protein operates within quinol/quinone metabolism; menaquinone biosynthesis; menaquinol from 1,4-dihydroxy-2-naphthoate: step 2/2. Functionally, methyltransferase required for the conversion of demethylmenaquinol (DMKH2) to menaquinol (MKH2). The sequence is that of Demethylmenaquinone methyltransferase from Geobacillus stearothermophilus (Bacillus stearothermophilus).